Reading from the N-terminus, the 318-residue chain is ATP synthase gamma chain (318 aa).

It belongs to the ATPase gamma chain family. As to quaternary structure, F-type ATPases have 2 components, CF(1) - the catalytic core - and CF(0) - the membrane proton channel. CF(1) has five subunits: alpha(3), beta(3), gamma(1), delta(1), epsilon(1). CF(0) has three main subunits: a, b and c.

Its subcellular location is the cell membrane. Produces ATP from ADP in the presence of a proton gradient across the membrane. The gamma chain is believed to be important in regulating ATPase activity and the flow of protons through the CF(0) complex. The polypeptide is ATP synthase gamma chain (Lactobacillus johnsonii (strain CNCM I-12250 / La1 / NCC 533)).